A 232-amino-acid chain; its full sequence is Clarin-1 (232 aa).

The helical transmembrane segment at 8-28 threads the bilayer; it reads IIFCMAGVFSFACALGVVTAL. N-linked (GlcNAc...) asparagine glycosylation occurs at Asn-48. The next 3 membrane-spanning stretches (helical) occupy residues 101 to 121, 135 to 155, and 186 to 206; these read VILFSAILIVLTMVGTAFFMY, LGLYLLSFISGSCGCLVMILF, and TTSFWVIFFCFFVHFLNGLLI.

This sequence belongs to the clarin family. Widely expressed. Found in the retina.

The protein localises to the cell membrane. Functionally, may have a role in the excitatory ribbon synapse junctions between hair cells and cochlear ganglion cells and presumably also in analogous synapses within the retina. The polypeptide is Clarin-1 (CLRN1) (Homo sapiens (Human)).